The following is a 255-amino-acid chain: Fasciclin-like arabinogalactan protein 14 (255 aa).

An N-terminal signal peptide occupies residues 1 to 23 (MSSSLTIFFFFFASTFLYTSSNS). The 146-residue stretch at 24–169 (FNITNILNEH…ISVLHISSAI (146 aa)) folds into the FAS1 domain. 4 N-linked (GlcNAc...) asparagine glycosylation sites follow: N25, N99, N125, and N159. Residues 179–231 (PTASPLSPVSSPPRPAESPNDDGQDFDEPPSSAPGAAADEPSENAGSANGVSR) are disordered. Acidic residues predominate over residues 197–206 (PNDDGQDFDE). Residues 222–231 (NAGSANGVSR) are compositionally biased toward polar residues. A lipid anchor (GPI-anchor amidated serine) is attached at S225. A propeptide spans 226–255 (ANGVSRNDSQPAFAFTLLMSFIWWFMARLR) (removed in mature form).

Belongs to the fasciclin-like AGP family.

Its subcellular location is the cell membrane. Its function is as follows. May be a cell surface adhesion protein. The polypeptide is Fasciclin-like arabinogalactan protein 14 (FLA14) (Arabidopsis thaliana (Mouse-ear cress)).